The following is a 126-amino-acid chain: Large ribosomal subunit protein bL17 (126 aa).

It belongs to the bacterial ribosomal protein bL17 family. As to quaternary structure, part of the 50S ribosomal subunit. Contacts protein L32.

The protein is Large ribosomal subunit protein bL17 of Aliivibrio fischeri (strain ATCC 700601 / ES114) (Vibrio fischeri).